Consider the following 155-residue polypeptide: 6,7-dimethyl-8-ribityllumazine synthase (155 aa).

5-amino-6-(D-ribitylamino)uracil contacts are provided by residues Trp-24, 58–60 (AFE), and 82–84 (AVI). 87–88 (GT) contributes to the (2S)-2-hydroxy-3-oxobutyl phosphate binding site. His-90 (proton donor) is an active-site residue. Phe-115 contributes to the 5-amino-6-(D-ribitylamino)uracil binding site. A (2S)-2-hydroxy-3-oxobutyl phosphate-binding site is contributed by Arg-129.

It belongs to the DMRL synthase family. In terms of assembly, forms an icosahedral capsid composed of 60 subunits, arranged as a dodecamer of pentamers.

The catalysed reaction is (2S)-2-hydroxy-3-oxobutyl phosphate + 5-amino-6-(D-ribitylamino)uracil = 6,7-dimethyl-8-(1-D-ribityl)lumazine + phosphate + 2 H2O + H(+). Its pathway is cofactor biosynthesis; riboflavin biosynthesis; riboflavin from 2-hydroxy-3-oxobutyl phosphate and 5-amino-6-(D-ribitylamino)uracil: step 1/2. In terms of biological role, catalyzes the formation of 6,7-dimethyl-8-ribityllumazine by condensation of 5-amino-6-(D-ribitylamino)uracil with 3,4-dihydroxy-2-butanone 4-phosphate. This is the penultimate step in the biosynthesis of riboflavin. This chain is 6,7-dimethyl-8-ribityllumazine synthase, found in Teredinibacter turnerae (strain ATCC 39867 / T7901).